We begin with the raw amino-acid sequence, 142 residues long: Ribonuclease VapC25 (142 aa).

In terms of domain architecture, PINc spans 3-139 (LIDVNVLLAA…ARFASVRHIR (137 aa)). 2 residues coordinate Mg(2+): aspartate 5 and aspartate 108.

It belongs to the PINc/VapC protein family. Requires Mg(2+) as cofactor.

In terms of biological role, toxic component of a type II toxin-antitoxin (TA) system. An RNase. Upon expression in M.smegmatis inhibits colony formation. Its toxic effect is neutralized by coexpression with cognate antitoxin VapB25. The chain is Ribonuclease VapC25 from Mycobacterium tuberculosis (strain ATCC 25618 / H37Rv).